The following is a 185-amino-acid chain: MINDIKKDAETRMEKCVEAFRNHISKIRTGRASPSILDGIMVDYYGSATPLRQLASVTVEDSRTLKINVFDRSIGAAVEKAIMTSDLGLNPSSAGSDIRVPLPALTEERRKDLIKVVRGEAEQGRVSVRNVRRDANDKLKALLKDKEISEDDDRRAQEDVQKMTDIFIKKVDAALADKETELMDF.

It belongs to the RRF family.

Its subcellular location is the cytoplasm. In terms of biological role, responsible for the release of ribosomes from messenger RNA at the termination of protein biosynthesis. May increase the efficiency of translation by recycling ribosomes from one round of translation to another. In Erwinia tasmaniensis (strain DSM 17950 / CFBP 7177 / CIP 109463 / NCPPB 4357 / Et1/99), this protein is Ribosome-recycling factor.